Consider the following 132-residue polypeptide: Protein MrkF (132 aa).

The protein resides in the fimbrium. Functionally, appears to affect the stability of the intact fimbriae on the cell surface. This is Protein MrkF (mrkF) from Klebsiella pneumoniae.